The chain runs to 76 residues: Large ribosomal subunit protein eL20 (76 aa).

Belongs to the eukaryotic ribosomal protein eL20 family. In terms of assembly, part of the 50S ribosomal subunit. Binds 23S rRNA.

The polypeptide is Large ribosomal subunit protein eL20 (Methanococcus maripaludis (strain C6 / ATCC BAA-1332)).